The primary structure comprises 24 residues: MAKEQQVQANDLQEKLIAVNRVAK.

The protein belongs to the universal ribosomal protein uS5 family. As to quaternary structure, part of the 30S ribosomal subunit. Contacts proteins S4 and S8.

With S4 and S12 plays an important role in translational accuracy. In terms of biological role, located at the back of the 30S subunit body where it stabilizes the conformation of the head with respect to the body. The chain is Small ribosomal subunit protein uS5 (rpsE) from Vibrio proteolyticus (Aeromonas proteolytica).